The chain runs to 164 residues: uncharacterized protein (164 aa).

Over residues 1-29 the composition is skewed to polar residues; that stretch reads MLCVRSSSSNLESDTYLSRYSTRASAGTG. Residues 1 to 62 form a disordered region; sequence MLCVRSSSSN…SKPSNNKNID (62 aa). Residues 43–62 show a composition bias toward low complexity; it reads SSDSSSSSSESKPSNNKNID.

This is an uncharacterized protein from Schizosaccharomyces pombe (strain 972 / ATCC 24843) (Fission yeast).